The following is a 396-amino-acid chain: Phosphopentomutase (396 aa).

Residues D13, D288, H293, D329, H330, and H341 each coordinate Mn(2+).

This sequence belongs to the phosphopentomutase family. The cofactor is Mn(2+).

The protein localises to the cytoplasm. The enzyme catalyses 2-deoxy-alpha-D-ribose 1-phosphate = 2-deoxy-D-ribose 5-phosphate. It catalyses the reaction alpha-D-ribose 1-phosphate = D-ribose 5-phosphate. It participates in carbohydrate degradation; 2-deoxy-D-ribose 1-phosphate degradation; D-glyceraldehyde 3-phosphate and acetaldehyde from 2-deoxy-alpha-D-ribose 1-phosphate: step 1/2. In terms of biological role, isomerase that catalyzes the conversion of deoxy-ribose 1-phosphate (dRib-1-P) and ribose 1-phosphate (Rib-1-P) to deoxy-ribose 5-phosphate (dRib-5-P) and ribose 5-phosphate (Rib-5-P), respectively. The sequence is that of Phosphopentomutase from Clostridium perfringens (strain SM101 / Type A).